The following is a 281-amino-acid chain: Succinate dehydrogenase [ubiquinone] iron-sulfur subunit 1, mitochondrial (281 aa).

The N-terminal 25 residues, 1-25 (MAAAALLRRSPAARALLSPALSSRL), are a transit peptide targeting the mitochondrion. The disordered stretch occupies residues 26-48 (VASKPHSSSPAPPPPPSKAGANT). The 2Fe-2S ferredoxin-type domain maps to 49–141 (KTFSIYRWDP…ASTISPLPHM (93 aa)). Residues Cys102, Cys107, and Cys122 each coordinate [2Fe-2S] cluster. Residues 184-214 (DRAKLDGMYECILCACCSTSCPSYWWNPEEY) enclose the 4Fe-4S ferredoxin-type domain. [4Fe-4S] cluster is bound by residues Cys194, Cys197, and Cys200. Cys204 contacts [3Fe-4S] cluster. Trp209 is an a ubiquinone binding site. Residues Cys251 and Cys257 each contribute to the [3Fe-4S] cluster site. Residue Cys261 participates in [4Fe-4S] cluster binding.

Belongs to the succinate dehydrogenase/fumarate reductase iron-sulfur protein family. Component of complex II composed of eight subunits in plants: four classical SDH subunits SDH1, SDH2, SDH3 and SDH4 (a flavoprotein (FP), an iron-sulfur protein (IP), and a cytochrome b composed of a large and a small subunit.), as well as four subunits unknown in mitochondria from bacteria and heterotrophic eukaryotes. [2Fe-2S] cluster serves as cofactor. [3Fe-4S] cluster is required as a cofactor. The cofactor is [4Fe-4S] cluster.

It localises to the mitochondrion inner membrane. It carries out the reaction a quinone + succinate = fumarate + a quinol. It participates in carbohydrate metabolism; tricarboxylic acid cycle; fumarate from succinate (eukaryal route): step 1/1. Its function is as follows. Iron-sulfur protein (IP) subunit of succinate dehydrogenase (SDH) that is involved in complex II of the mitochondrial electron transport chain and is responsible for transferring electrons from succinate to ubiquinone (coenzyme Q). This chain is Succinate dehydrogenase [ubiquinone] iron-sulfur subunit 1, mitochondrial, found in Oryza sativa subsp. japonica (Rice).